The primary structure comprises 138 residues: Small ribosomal subunit protein uS11c (138 aa).

Residues 1–25 (MAKSIPRTGSRRNVRSGSRKSTRRI) form a disordered region. Residues 9–25 (GSRRNVRSGSRKSTRRI) show a composition bias toward basic residues.

Belongs to the universal ribosomal protein uS11 family. As to quaternary structure, part of the 30S ribosomal subunit.

The protein resides in the plastid. It is found in the chloroplast. In Eucalyptus globulus subsp. globulus (Tasmanian blue gum), this protein is Small ribosomal subunit protein uS11c.